A 478-amino-acid polypeptide reads, in one-letter code: Sodium-dependent phosphate transport protein 3 (478 aa).

4 N-linked (GlcNAc...) asparagine glycosylation sites follow: asparagine 28, asparagine 47, asparagine 56, and asparagine 69. Transmembrane regions (helical) follow at residues 98-118 (ISYG…IFGA), 130-150 (SLLT…VIVI), 183-203 (SIAG…GGLI), 211-231 (FIFY…FTVI), 273-293 (LPLW…TIII), 317-337 (LPFI…DFLL), 341-361 (LLSL…LPSL), 363-383 (AVAL…LILI), 405-425 (YASF…IISS), and 442-462 (NVFF…LIFG).

This sequence belongs to the major facilitator superfamily. Sodium/anion cotransporter family. In terms of tissue distribution, expressed in the liver, kidney, placenta, lung and thyroid (at protein level).

The protein localises to the apical cell membrane. The enzyme catalyses 3 Na(+)(out) + phosphate(out) = 3 Na(+)(in) + phosphate(in). It carries out the reaction urate(out) + n chloride(in) = urate(in) + n chloride(out). Acts as a membrane potential-dependent organic anion transporter, the transport requires a low concentration of chloride ions. Mediates chloride-dependent transport of urate. Can actively transport inorganic phosphate into cells via Na(+) cotransport. This chain is Sodium-dependent phosphate transport protein 3 (Slc17a2), found in Mus musculus (Mouse).